Reading from the N-terminus, the 18141-residue chain is Titin (18141 aa).

The segment covering 1-31 (MQRQNPNPYQQQNQQHQQVQQFSSQEYSHSS) has biased composition (low complexity). Residues 1-69 (MQRQNPNPYQ…QHHGGSIGGA (69 aa)) are disordered. The segment covering 32–47 (QEQHQEQRISRTEQHV) has biased composition (basic and acidic residues). Positions 48-62 (QRSQVTTQRQVQQHH) are enriched in low complexity. Ig-like domains are found at residues 86 to 177 (PPVF…VYIQ), 255 to 343 (PQIS…AVLA), 372 to 461 (PAFV…AQLN), 471 to 559 (PQFV…ARLY), 618 to 708 (PQFI…AILS), 751 to 842 (PQFI…SSIR), 890 to 981 (PQFK…AQLT), 1024 to 1115 (PRFL…ATMI), 1158 to 1249 (PVFV…ACVR), 1291 to 1381 (PQFT…CSVR), 1424 to 1515 (PRFL…VELQ), 1558 to 1643 (PVFT…EAIT), 1691 to 1781 (PVFT…ASLI), 1824 to 1917 (PVFV…LNVT), 1958 to 2050 (PQFG…VNVT), 2089 to 2180 (PIFL…CNVR), and 2222 to 2313 (PHFT…TNLR). A disordered region spans residues 236 to 266 (EQDSQLSQELDRNQGPAQAPQISQKPRSSKL). Cys393 and Cys445 are oxidised to a cystine. Intrachain disulfides connect Cys1312-Cys1365, Cys1446-Cys1499, and Cys1579-Cys1632. The cysteines at positions 1846 and 1899 are disulfide-linked. Cys2111 and Cys2164 are disulfide-bonded. A compositionally biased stretch (basic and acidic residues) spans 2338–2347 (STAPHQRQEP). A disordered region spans residues 2338 to 2357 (STAPHQRQEPETPGTRQRPV). Ig-like domains are found at residues 2356-2449 (PVFT…MRVV), 2488-2581 (PIFT…MKVK), and 2622-2715 (PVFT…LKIE). The segment at 2731 to 2750 (PRIGELEAPKEGRPEAPEPT) is disordered. The segment covering 2734–2746 (GELEAPKEGRPEA) has biased composition (basic and acidic residues). Ig-like domains follow at residues 2754–2844 (PVFI…GTLK), 2891–2983 (PPVW…TTIF), 3029–3116 (PRFT…AEIS), 3130–3221 (PRFT…TTLN), 3263–3354 (PKFI…ASLK), 3401–3494 (PVFT…MKIQ), 3539–3625 (PEFI…ATVS), 3676–3767 (PKFT…AKVT), and 3811–3901 (PKFT…ATVS). Cys2775 and Cys2828 are joined by a disulfide. Cys3152 and Cys3205 are disulfide-bonded. Disulfide bonds link Cys3560-Cys3613, Cys3698-Cys3751, and Cys3832-Cys3885. One copy of the TPR 1 repeat lies at 3910-3944 (LQNQVPRGMKRSDALTQMEATIKKYTSEVHLTEDD). Ig-like domains lie at 3954–4047 (PRFV…IKVS) and 4092–4181 (PVFV…LKVV). A disulfide bridge connects residues Cys3976 and Cys4029. A coiled-coil region spans residues 4204–4229 (AAYQKERQENELEKVFDERKQVLSEQ). Disordered stretches follow at residues 4226–4254 (LSEQ…DWQQ) and 4299–4336 (SSQA…PSES). Positions 4309-4322 (YEENLQEKTSTTEV) are enriched in polar residues. 4 Ig-like domains span residues 4394-4482 (PVFT…ANLV), 4497-4585 (PSFV…GDCI), 4604-4692 (PHIV…AQLK), and 4703-4791 (PTIT…AKLT). The TPR 2 repeat unit spans residues 4403 to 4438 (CRVFENEQAKFEVEFEGEPNPTVKWYRESFPIQNSP). Cys4625 and Cys4676 are joined by a disulfide. Disordered regions lie at residues 4803–4891 (RTID…DKGV), 5318–5368 (DELV…QPEP), 5413–5648 (RVIP…EVDA), 5667–5701 (IKKT…VPQK), 5718–5748 (KKTK…EVVQ), 5775–5982 (KEEE…QRLL), 6034–6350 (KRVK…MPVD), and 6364–6393 (EEEV…EASV). Low complexity predominate over residues 4822–4841 (PESPHAFQPGQQPGQQFGQF). Residues 4852 to 4863 (GRSRQKKPKVRS) show a composition bias toward basic residues. 5 stretches are compositionally biased toward basic and acidic residues: residues 5344-5357 (QPQE…HDEL), 5436-5447 (RPKEAVKAEEIQ), 5541-5552 (QKPDEQKQELPK), 5591-5621 (IEEK…EKPE), and 5633-5645 (PKSE…HPDE). The TPR 3 repeat unit spans residues 5575-5613 (PVLWERKKKKPQPQDVIEEKLDVAPTKTYEKAVDVLPDE). Acidic residues predominate over residues 5681 to 5697 (EELFEEQPEEEISPEEE). 2 stretches are compositionally biased toward acidic residues: residues 5779–5792 (IPTE…ETAE) and 5818–5860 (DVEE…QDEI). The segment covering 5865–5874 (RKVKKAKKPK) has biased composition (basic residues). Over residues 5883 to 5904 (EIEEDQPEEEVLQEEIIGEQEE) the composition is skewed to acidic residues. Residues 5910 to 5920 (RKVKSIKKPKK) are compositionally biased toward basic residues. A compositionally biased stretch (basic and acidic residues) spans 5921–5971 (VVTEKTVDQTEQPEKPEESQAEEVKETVTEEPKKPKPAPEEAKVEQVEKIS). Residues 6034 to 6043 (KRVKKKKPKT) are compositionally biased toward basic residues. Positions 6049–6079 (ESTEEPAEETEEFEEEATQPEEVQPVEEIPE) are enriched in acidic residues. 6 stretches are compositionally biased toward basic and acidic residues: residues 6081 to 6092 (PQVKEVADERKT), 6099 to 6133 (RKEE…EVRL), 6141 to 6169 (IKPE…EEKR), 6195 to 6209 (EAEH…KPEE), 6217 to 6234 (KRGE…EKKW), and 6259 to 6268 (PIEEQQKPEK). Residues 6281–6290 (PESEEEELEL) show a composition bias toward acidic residues. Basic and acidic residues predominate over residues 6291–6306 (EPLKLPEDKKPKEPKA). The segment covering 6307–6318 (KKEKKKKPKLKK) has biased composition (basic residues). Acidic residues-rich tracts occupy residues 6325 to 6349 (EVSE…EMPV) and 6364 to 6373 (EEEVVPTEET). Ig-like domains lie at 6536–6624 (PRIT…TNII), 6633–6728 (PQFT…NILS), 6741–6830 (PTVT…VVVS), 6841–6929 (PRFI…ATVN), 6942–7034 (PRFV…VKIQ), 7066–7151 (PKII…VAVT), and 7189–7279 (PSLL…FDIS). Cysteines 6557 and 6608 form a disulfide. A disulfide bond links Cys6964 and Cys7016. Positions 7621-7663 (KIQVQTKQIAQMNTKIKKHKKHKQQEQEVSETTIQCEQKETLA) form a coiled coil. Disordered stretches follow at residues 7773–7793 (AKTA…VKAQ), 9414–9440 (EEDD…EEIQ), 9485–9510 (EEDD…PEEI), 9556–9582 (EEDD…EEIQ), 9627–9652 (EEDD…PEEI), 9698–9724 (EEDD…EEIQ), 9769–9796 (EEDD…EIQE), 9838–9865 (TAEE…PEEI), 9911–9937 (EEDD…EEIQ), 9982–10008 (EEDD…EEIQ), 10053–10080 (EEDD…EIQE), 10125–10149 (ENDK…PEEI), 10195–10220 (EEDD…PEEI), 10266–10291 (EEDD…PEEI), 10337–10364 (EEDD…EIQE), 10408–10433 (EEDD…PEEI), 10479–10504 (EEDD…PEEI), 10550–10576 (EEDD…EEIQ), 10621–10648 (EEDD…EIQE), 10692–10717 (EEDD…PEEI), 10763–10788 (EEDD…PEEI), 10834–10860 (EEDD…EEIQ), 10905–10932 (EEDD…EIQE), 11047–11073 (EEDD…EEIQ), 11118–11143 (EEDD…PEEI), 11189–11216 (EEDD…EIQE), 11260–11286 (EEDD…EEIQ), 11679–11703 (EELD…RGPD), and 11767–11795 (TEPE…LETP). The segment covering 7774–7783 (KTAESSKELP) has biased composition (basic and acidic residues). Acidic residues-rich tracts occupy residues 9429–9440 (VPYEEEKPEEIQ), 9500–9510 (VPYEEEKPEEI), 9571–9582 (VPYEEEKPEEIQ), 9642–9652 (VPYEEEKPEEI), 9713–9724 (VPYEEEKPEEIQ), 9784–9796 (VPYE…EIQE), 9855–9865 (VPYEEEKPEEI), 9926–9937 (VPYEEEKPEEIQ), 9997–10008 (VPYEEEKPEEIQ), 10068–10080 (VPYE…EIQE), 10139–10149 (VPYEEEKPEEI), 10210–10220 (VPYEEEKPEEI), 10281–10291 (VPYEEEKPEEI), 10352–10364 (VPYE…EIQE), 10423–10433 (VPYEEEKPEEI), 10494–10504 (VPYEEEKPEEI), 10565–10576 (VPYEEEKPEEIQ), 10636–10648 (VPYE…EIQE), 10707–10717 (VPYEEEKPEEI), 10778–10788 (VPYEEEKPEEI), 10849–10860 (VPYEEEKPEEIQ), 10920–10932 (VPYE…EIQE), 11062–11073 (VPYEEEKPEEIQ), 11133–11143 (VPYEEEKPEEI), 11204–11216 (VPYE…EIQE), and 11275–11286 (VPYEEEKPEEIQ). A compositionally biased stretch (basic residues) spans 11686-11699 (KPKKKTTKTRTFKK). Positions 11780 to 11792 (PTKDKTPKQKKTL) are enriched in basic and acidic residues. One copy of the TPR 4 repeat lies at 11872–11905 (KTVLQPYQRTEMELPQRARRDSSFKQPVKLTPMK). Disordered stretches follow at residues 12003-12201 (FKHS…ADTK), 12451-12471 (TLQV…KKPE), 12685-12767 (TVDD…LPGP), 12943-12971 (IDHE…KEKS), 13131-13154 (IKKK…ETRP), 13325-13349 (QSFE…KPKK), 13471-13492 (EEYE…KSHN), 13554-13576 (EADK…PLKK), 13702-13792 (KVQK…KSPD), 13891-13914 (EEVQ…KAKK), 13951-13994 (MKRK…DEPK), 14073-14094 (TTVP…RTKK), 14109-14322 (EEEA…QVTT), 14354-14377 (EYEP…RKVK), 14414-14448 (PLDS…ETPV), 14533-14566 (EPEI…KVKK), 14583-14720 (KVDL…SELP), and 14756-14789 (VEES…KSKK). 6 stretches are compositionally biased toward basic and acidic residues: residues 12022-12035 (ESDH…ELLH), 12044-12054 (EKIETPDESRK), 12124-12134 (MERTSDIREES), 12183-12201 (LNLR…ADTK), 12457-12471 (TEHE…KKPE), and 12685-12709 (TVDD…KISE). Residues 12731–12741 (HDEDLQTDEYS) show a composition bias toward acidic residues. Basic residues predominate over residues 12750–12760 (KSKKKSTKKQK). The span at 13141–13154 (GPKEQVFEITETRP) shows a compositional bias: basic and acidic residues. Positions 13482–13492 (KKPKKKVKSHN) are enriched in basic residues. A TPR 5 repeat occupies 13566-13599 (QPIKKEKPLKKKKDVEYPVSLEAFDHTVKVVSEP). Positions 13733-13747 (LVKEDLDQPIERALE) are enriched in basic and acidic residues. A compositionally biased stretch (basic residues) spans 13771–13781 (PKPKKISKPKS). Basic and acidic residues-rich tracts occupy residues 13893 to 13906 (VQEK…EKKA) and 13975 to 13984 (EDKPVEKISE). A compositionally biased stretch (basic and acidic residues) spans 14221–14240 (TVEKPLEALHTDSDLEKPDV). The segment covering 14264–14274 (KISSEQPKQPS) has biased composition (low complexity). Residues 14282-14294 (VTEHDLKPEEEKP) are compositionally biased toward basic and acidic residues. Positions 14542–14554 (IEEHPEQSKEKLA) are enriched in basic and acidic residues. Residues 14555 to 14564 (PKPKKTVRKV) are compositionally biased toward basic residues. Basic and acidic residues predominate over residues 14583–14599 (KVDLEKYEKVEMPEKPV). Over residues 14652 to 14662 (ETTVDTTDIPE) the composition is skewed to low complexity. The span at 14664-14683 (TPTQTAQPEDTATAQITPSA) shows a compositional bias: polar residues. Residues 14684–14697 (QEEKSTQDDTKDTI) show a composition bias toward basic and acidic residues. A compositionally biased stretch (acidic residues) spans 14756 to 14771 (VEESQPIVEEVEDEEP). One copy of the TPR 6 repeat lies at 14904-14936 (IPKTTDIGAIKDNGELSRNIEEAEEILKFKPHK). Disordered regions lie at residues 14956–15208 (EKYI…VSVK), 15301–15329 (TRKK…IQPD), 15425–15448 (ISET…ETPK), 15578–15597 (IRVS…QFTV), 15697–15722 (EKPA…PKPE), 15825–15876 (EEPK…VEEP), 15951–15973 (ESQP…KAPI), and 16181–16206 (QEEE…KPLQ). Basic and acidic residues-rich tracts occupy residues 14967–14989 (EKTP…DVKL), 15024–15046 (ELKQ…KDGE), 15069–15080 (QIEHPEIPEKVK), 15088–15097 (KPKDKSKSEP), 15109–15139 (PKEE…EIKL), 15169–15179 (IEDKAIDDEKK), 15189–15198 (QPKEQEIAKE), 15316–15325 (VTLKEPKEEQ), 15425–15437 (ISET…KPIE), and 15578–15589 (IRVSESEPKPEE). The span at 15703–15716 (IVEEEEPVVTEPIE) shows a compositional bias: acidic residues. The span at 15951–15964 (ESQPEAVEDKEVSL) shows a compositional bias: basic and acidic residues. The segment covering 16183–16193 (EEYEEGEDIEE) has biased composition (acidic residues). One can recognise an SH3 domain in the interval 16409–16470 (ENLNIMYSIC…PAQYLMEPEE (62 aa)). Ig-like domains lie at 16501–16590 (PRFI…TELI), 16625–16719 (PTFS…ITLK), 16728–16811 (PQIL…ANLT), 16822–16916 (PPLF…VEVD), 16919–17001 (TFTK…STVE), 17007–17091 (PDFI…CELV), 17097–17180 (PEIV…AKLT), 17184–17270 (PLVD…TKLC), and 17277–17363 (PPVI…AEAS). A disulfide bond links Cys16940 and Cys16989. In terms of domain architecture, Fibronectin type-III 1 spans 17374–17467 (APGTPQPLEI…LSPPIRLVPK (94 aa)). Ig-like domains follow at residues 17473 to 17558 (PSVQ…CRLK) and 17563 to 17653 (PVLE…CTVQ). The cysteines at positions 17494 and 17542 are disulfide-linked. 4 consecutive Fibronectin type-III domains span residues 17660 to 17755 (RPQS…TKKF), 17760 to 17861 (PPRG…TPPS), 17862 to 17958 (PPQN…THAS), and 17982 to 18078 (PPTG…AMTA). The stretch at 17694-17728 (LEKCDVQNNVWMKVSDFNKDIKSYAVQKLSMNAQY) is one TPR 7 repeat. A disordered region spans residues 17741–17771 (SEPTESDPVTITKKFEKPSPPRGPTTVSGMN).

Belongs to the protein kinase superfamily. CAMK Ser/Thr protein kinase family. As to quaternary structure, interacts with Msp300; this interaction mediates the recruitment of Msp300 to the Z-disks. In terms of tissue distribution, expressed in the mesoderm at stage 11, several hours before myoblast fusion, and persists in most muscle cells, somatic, visceral and pharyngeal muscles and their precursors, until the third instar. Isoform A: Expressed in the indirect flight muscle (at protein level).

The protein resides in the cytoplasm. It localises to the nucleus. Its subcellular location is the chromosome. It is found in the myofibril. The protein localises to the sarcomere. The protein resides in the z line. Its function is as follows. Key component in the assembly and functioning of adult and embryonic striated muscles and muscle tendons. By providing connections at the level of individual microfilaments, it contributes to the fine balance of forces between the two halves of the sarcomere. The size and extensibility of the cross-links are the main determinants of sarcomere extensibility properties of muscle. In non-muscle cells, seems to play a role in chromosome condensation and chromosome segregation during mitosis. Might link the lamina network to chromatin or nuclear actin, or both during interphase. This is Titin (sls) from Drosophila melanogaster (Fruit fly).